Here is a 369-residue protein sequence, read N- to C-terminus: UPF0283 membrane protein RPA1583 (369 aa).

Residues 1 to 61 (MTERVPPRRP…APPPPPPRAR (61 aa)) form a disordered region. The span at 34 to 51 (AKPSAKADARPAASAAGA) shows a compositional bias: low complexity. 3 consecutive transmembrane segments (helical) span residues 90 to 110 (WGTV…WLWI), 124 to 144 (LGTI…IIIG), and 239 to 259 (VSLV…VAIA).

It belongs to the UPF0283 family.

The protein resides in the cell inner membrane. The protein is UPF0283 membrane protein RPA1583 of Rhodopseudomonas palustris (strain ATCC BAA-98 / CGA009).